A 643-amino-acid polypeptide reads, in one-letter code: Phosphomethylpyrimidine synthase (643 aa).

Residues N248, M277, Y306, H342, 362 to 364 (SRG), 403 to 406 (DGLR), and E442 each bind substrate. Residue H446 coordinates Zn(2+). Y469 is a substrate binding site. Position 510 (H510) interacts with Zn(2+). Residues C590, C593, and C598 each contribute to the [4Fe-4S] cluster site.

The protein belongs to the ThiC family. In terms of assembly, homodimer. [4Fe-4S] cluster serves as cofactor.

It catalyses the reaction 5-amino-1-(5-phospho-beta-D-ribosyl)imidazole + S-adenosyl-L-methionine = 4-amino-2-methyl-5-(phosphooxymethyl)pyrimidine + CO + 5'-deoxyadenosine + formate + L-methionine + 3 H(+). Its pathway is cofactor biosynthesis; thiamine diphosphate biosynthesis. Its function is as follows. Catalyzes the synthesis of the hydroxymethylpyrimidine phosphate (HMP-P) moiety of thiamine from aminoimidazole ribotide (AIR) in a radical S-adenosyl-L-methionine (SAM)-dependent reaction. The protein is Phosphomethylpyrimidine synthase of Burkholderia orbicola (strain MC0-3).